The primary structure comprises 67 residues: MKFIMKFIKSNKGQISLEFSLLVMVVVLSAIIVSYYLIKTAIETRNANMDVINQSSNVAEKSLSNVT.

The propeptide occupies 1–13 (MKFIMKFIKSNKG). Positions 14-22 (QISLEFSLL) match the QXSXEXXXL motif.

In terms of processing, the N-terminus is cleaved by the prepilin peptidase EppA, which recognizes the class III signal sequence.

It localises to the secreted. It is found in the cell surface. The protein resides in the fimbrium. This is Probable pilin MJ1400 from Methanocaldococcus jannaschii (strain ATCC 43067 / DSM 2661 / JAL-1 / JCM 10045 / NBRC 100440) (Methanococcus jannaschii).